The following is a 452-amino-acid chain: Proline--tRNA ligase (452 aa).

Belongs to the class-II aminoacyl-tRNA synthetase family. ProS type 2 subfamily. In terms of assembly, homodimer.

It is found in the cytoplasm. The enzyme catalyses tRNA(Pro) + L-proline + ATP = L-prolyl-tRNA(Pro) + AMP + diphosphate. In terms of biological role, catalyzes the attachment of proline to tRNA(Pro) in a two-step reaction: proline is first activated by ATP to form Pro-AMP and then transferred to the acceptor end of tRNA(Pro). In Jannaschia sp. (strain CCS1), this protein is Proline--tRNA ligase.